We begin with the raw amino-acid sequence, 139 residues long: Putative nickel-responsive regulator (139 aa).

Residues histidine 79, histidine 90, histidine 92, and cysteine 98 each contribute to the Ni(2+) site.

The protein belongs to the transcriptional regulatory CopG/NikR family. The cofactor is Ni(2+).

Functionally, transcriptional regulator. The protein is Putative nickel-responsive regulator of Lawsonia intracellularis (strain PHE/MN1-00).